The primary structure comprises 210 residues: uncharacterized protein (210 aa).

This is an uncharacterized protein from Fowl adenovirus A serotype 1 (strain CELO / Phelps) (FAdV-1).